The following is a 796-amino-acid chain: Bud site selection protein 27 (796 aa).

The stretch at 81–121 (KEEAITFVDDKLKLMEDAIEQFNLKIEEAKKTLDNLNHMED) forms a coiled coil. Over residues 152-168 (VISSSVTPTTKQPSQSN) the composition is skewed to polar residues. Disordered regions lie at residues 152–197 (VISS…EENL), 300–344 (LRAQ…QVGF), 421–458 (EGEA…TTRS), 535–624 (EKEP…AKTG), and 752–796 (ATAS…DSKP). Composition is skewed to basic and acidic residues over residues 169–197 (SKKE…EENL) and 306–318 (SQDH…DVNK). Basic residues predominate over residues 427–441 (SNRRTRVSRFRKDRA). A compositionally biased stretch (basic and acidic residues) spans 535 to 550 (EKEPEINSKSEFETPF). Over residues 551 to 568 (KKKKLKSLQKPRSSKSMK) the composition is skewed to basic residues. Acidic residues predominate over residues 579-589 (ISDDDYDDDDD). Position 580 is a phosphoserine (S580). Over residues 601 to 610 (NNTDEQDKFP) the composition is skewed to basic and acidic residues.

This sequence belongs to the prefoldin subunit alpha family.

It localises to the cytoplasm. Involved in gene expression controlled by TOR kinase and nutrient signaling. May also be involved in positioning the proximal bud pole signal. The protein is Bud site selection protein 27 (BUD27) of Saccharomyces cerevisiae (strain ATCC 204508 / S288c) (Baker's yeast).